The chain runs to 226 residues: Protein GrpE (226 aa).

Disordered stretches follow at residues M1–L31 and V189–A226. The segment covering G192–G218 has biased composition (low complexity).

The protein belongs to the GrpE family. Homodimer.

The protein resides in the cytoplasm. Participates actively in the response to hyperosmotic and heat shock by preventing the aggregation of stress-denatured proteins, in association with DnaK and GrpE. It is the nucleotide exchange factor for DnaK and may function as a thermosensor. Unfolded proteins bind initially to DnaJ; upon interaction with the DnaJ-bound protein, DnaK hydrolyzes its bound ATP, resulting in the formation of a stable complex. GrpE releases ADP from DnaK; ATP binding to DnaK triggers the release of the substrate protein, thus completing the reaction cycle. Several rounds of ATP-dependent interactions between DnaJ, DnaK and GrpE are required for fully efficient folding. The chain is Protein GrpE from Methylobacterium nodulans (strain LMG 21967 / CNCM I-2342 / ORS 2060).